The following is a 502-amino-acid chain: AAAMDFSHWINLKVILEELQLRGHEITVLVPSPSLLLDHTKIPFNVEVLQLQVTKETLMEELNTVLYMSSFELPTLSWWKVLGKMVEMGKQFSKNLRRVCDSAITNKELLDRLKAAKFDICLADPLAFCGELVAELLNIPFVYSFRFSIGNIIERSCAGLPTPSSYVPGSTSGLTDNMSFVQRLKNWLLYLMNDMMFSHFMLSEWDEYYSKVLGRRTTICEIMGKAEMWLIRSYWDFEFPRPFLPNFEYVGGLHCKPAKPLPEELEEFVQSSGNDGVVVFTLGSMIQNLTEERSNLIASALAQIPQKVLWRYTGKKPATLGPNTRLFEWIPQNDLLGHPKTRAFITHGGTNGLYEAIYHGVPMVGIPLFGDQPDNIARVKAKGAAVDVDLRIMTTSSLLKALKDVINNPSYKENAMKLSRIHHDQPLKPLDRAVFWIEFVMRHKGARHLRVAAHDLTWFQYYSLDVVVFLLTCVATIIFLAKKCCLFFYRRFCKTGNKRKRE.

Residues Asn-177 and Asn-288 are each glycosylated (N-linked (GlcNAc...) asparagine). The helical transmembrane segment at 466 to 481 (VVVFLLTCVATIIFLA) threads the bilayer.

This sequence belongs to the UDP-glycosyltransferase family.

The protein localises to the microsome membrane. It localises to the endoplasmic reticulum membrane. It carries out the reaction glucuronate acceptor + UDP-alpha-D-glucuronate = acceptor beta-D-glucuronoside + UDP + H(+). Functionally, UDPGT is of major importance in the conjugation and subsequent elimination of potentially toxic xenobiotics and endogenous compounds. This Oryctolagus cuniculus (Rabbit) protein is UDP-glucuronosyltransferase 2C1 (UGT2C1).